Here is a 113-residue protein sequence, read N- to C-terminus: Large ribosomal subunit protein bL19 (113 aa).

Belongs to the bacterial ribosomal protein bL19 family.

In terms of biological role, this protein is located at the 30S-50S ribosomal subunit interface and may play a role in the structure and function of the aminoacyl-tRNA binding site. The polypeptide is Large ribosomal subunit protein bL19 (Rhodococcus jostii (strain RHA1)).